Reading from the N-terminus, the 412-residue chain is Phosphoglycerate kinase (412 aa).

Substrate-binding positions include 24-26, Arg44, 67-70, Arg126, and Arg170; these read DLN and HLGR. Residues Lys220, Gly308, Glu339, and 368–371 each bind ATP; that span reads GGDS.

It belongs to the phosphoglycerate kinase family. In terms of assembly, monomer.

It is found in the cytoplasm. The catalysed reaction is (2R)-3-phosphoglycerate + ATP = (2R)-3-phospho-glyceroyl phosphate + ADP. The protein operates within carbohydrate degradation; glycolysis; pyruvate from D-glyceraldehyde 3-phosphate: step 2/5. The sequence is that of Phosphoglycerate kinase from Mycobacteroides abscessus (strain ATCC 19977 / DSM 44196 / CCUG 20993 / CIP 104536 / JCM 13569 / NCTC 13031 / TMC 1543 / L948) (Mycobacterium abscessus).